The chain runs to 120 residues: NAD(P)H-quinone oxidoreductase subunit 3, chloroplastic (120 aa).

3 helical membrane passes run 9-29 (IFWA…LISA), 64-84 (MFAL…PWAM), and 88-108 (VLGV…IVGL).

Belongs to the complex I subunit 3 family. As to quaternary structure, NDH is composed of at least 16 different subunits, 5 of which are encoded in the nucleus.

The protein resides in the plastid. It is found in the chloroplast thylakoid membrane. The catalysed reaction is a plastoquinone + NADH + (n+1) H(+)(in) = a plastoquinol + NAD(+) + n H(+)(out). It carries out the reaction a plastoquinone + NADPH + (n+1) H(+)(in) = a plastoquinol + NADP(+) + n H(+)(out). Functionally, NDH shuttles electrons from NAD(P)H:plastoquinone, via FMN and iron-sulfur (Fe-S) centers, to quinones in the photosynthetic chain and possibly in a chloroplast respiratory chain. The immediate electron acceptor for the enzyme in this species is believed to be plastoquinone. Couples the redox reaction to proton translocation, and thus conserves the redox energy in a proton gradient. This is NAD(P)H-quinone oxidoreductase subunit 3, chloroplastic from Citrus sinensis (Sweet orange).